The sequence spans 487 residues: Probable nuclear hormone receptor HR3 (487 aa).

The segment at residues 48–123 (IIPCKVCGDK…LGMSRDAVKF (76 aa)) is a DNA-binding region (nuclear receptor). 2 consecutive NR C4-type zinc fingers follow at residues 51–71 (CKVC…CEGC) and 87–111 (CPRN…LQKC). The disordered stretch occupies residues 145-176 (MRAQSDAAPDSSVYDTQTPSSSDQLHHNNYNS). A compositionally biased stretch (polar residues) spans 157–167 (VYDTQTPSSSD). Residues 237-480 (INDVLIKTLA…PALYKELFSI (244 aa)) enclose the NR LBD domain.

The protein belongs to the nuclear hormone receptor family. NR1 subfamily.

It is found in the nucleus. In terms of biological role, putative receptor whose ligand is not yet known. The polypeptide is Probable nuclear hormone receptor HR3 (Drosophila melanogaster (Fruit fly)).